The primary structure comprises 251 residues: Ubiquinone/menaquinone biosynthesis C-methyltransferase UbiE (251 aa).

Residues Thr74, Asp95, 123 to 124, and Ser140 contribute to the S-adenosyl-L-methionine site; that span reads NA.

The protein belongs to the class I-like SAM-binding methyltransferase superfamily. MenG/UbiE family.

The catalysed reaction is a 2-demethylmenaquinol + S-adenosyl-L-methionine = a menaquinol + S-adenosyl-L-homocysteine + H(+). It catalyses the reaction a 2-methoxy-6-(all-trans-polyprenyl)benzene-1,4-diol + S-adenosyl-L-methionine = a 5-methoxy-2-methyl-3-(all-trans-polyprenyl)benzene-1,4-diol + S-adenosyl-L-homocysteine + H(+). The protein operates within quinol/quinone metabolism; menaquinone biosynthesis; menaquinol from 1,4-dihydroxy-2-naphthoate: step 2/2. It functions in the pathway cofactor biosynthesis; ubiquinone biosynthesis. Functionally, methyltransferase required for the conversion of demethylmenaquinol (DMKH2) to menaquinol (MKH2) and the conversion of 2-polyprenyl-6-methoxy-1,4-benzoquinol (DDMQH2) to 2-polyprenyl-3-methyl-6-methoxy-1,4-benzoquinol (DMQH2). The chain is Ubiquinone/menaquinone biosynthesis C-methyltransferase UbiE from Serratia proteamaculans (strain 568).